Consider the following 119-residue polypeptide: MALKIRLRQQGRRNHVVYRLVLADVESPRDGRYIELLGWYDPHSAVNYQLKGDRIFHWLSQGAELTEKAAVLIKQGAPGVYSELMAKQAARKAAVCQKRRAYRQRRSLKRAEAAKAAAK.

This sequence belongs to the bacterial ribosomal protein bS16 family.

The polypeptide is Small ribosomal subunit protein bS16 (Chlamydia caviae (strain ATCC VR-813 / DSM 19441 / 03DC25 / GPIC) (Chlamydophila caviae)).